Reading from the N-terminus, the 91-residue chain is ATP-dependent Clp protease adapter protein ClpS (91 aa).

This sequence belongs to the ClpS family. In terms of assembly, binds to the N-terminal domain of the chaperone ClpA.

Involved in the modulation of the specificity of the ClpAP-mediated ATP-dependent protein degradation. This is ATP-dependent Clp protease adapter protein ClpS from Synechococcus sp. (strain ATCC 27144 / PCC 6301 / SAUG 1402/1) (Anacystis nidulans).